A 473-amino-acid polypeptide reads, in one-letter code: 6-phospho-beta-glucosidase (473 aa).

The active-site Proton donor is the Glu-174. The active-site Nucleophile is Glu-366.

Belongs to the glycosyl hydrolase 1 family.

The enzyme catalyses 6-phospho-beta-D-glucosyl-(1-&gt;4)-D-glucose + H2O = D-glucose 6-phosphate + D-glucose. The chain is 6-phospho-beta-glucosidase (abgA) from Clostridium longisporum.